Consider the following 257-residue polypeptide: Global transcriptional regulator CodY (257 aa).

Residues 1 to 155 (MSLLSKTREL…AATVIGMEIL (155 aa)) are GAF domain. Residues 203-222 (ASKVADRVGITRSVIVNALR) constitute a DNA-binding region (H-T-H motif).

This sequence belongs to the CodY family.

Its subcellular location is the cytoplasm. DNA-binding global transcriptional regulator which is involved in the adaptive response to starvation and acts by directly or indirectly controlling the expression of numerous genes in response to nutrient availability. During rapid exponential growth, CodY is highly active and represses genes whose products allow adaptation to nutrient depletion. In Staphylococcus haemolyticus (strain JCSC1435), this protein is Global transcriptional regulator CodY.